The following is a 341-amino-acid chain: Tryptophan--tRNA ligase (341 aa).

Residues Arg11–Thr13 and Gly19–His20 contribute to the ATP site. A 'HIGH' region motif is present at residues Pro12–His20. Asp140 is an L-tryptophan binding site. Residues Gly152–Asp154, Leu194, and Lys202–Ser206 contribute to the ATP site. Positions Lys202–Ser206 match the 'KMSKS' region motif.

Belongs to the class-I aminoacyl-tRNA synthetase family. Homodimer.

It is found in the cytoplasm. The catalysed reaction is tRNA(Trp) + L-tryptophan + ATP = L-tryptophyl-tRNA(Trp) + AMP + diphosphate + H(+). Its function is as follows. Catalyzes the attachment of tryptophan to tRNA(Trp). This chain is Tryptophan--tRNA ligase, found in Lactococcus lactis subsp. lactis (strain IL1403) (Streptococcus lactis).